A 158-amino-acid polypeptide reads, in one-letter code: Probable host range protein 2-1 (158 aa).

Belongs to the poxviridae C7 protein family.

Plays a role for multiplication of the virus in different cell types. In Oryctolagus cuniculus (Rabbit), this protein is Probable host range protein 2-1.